Reading from the N-terminus, the 628-residue chain is MAHAPEPDPAACDLGDERPKWDNKAQYLLSCTGFAVGLGNIWRFPYLCQTYGGGAFLIPYVIALVFEGIPIFHVELAIGQRLRKGSVGVWTAISPYLSGVGLGCVTLSFLISLYYNTIVAWVLWYLLNSFQHPLPWSSCPPDLNRTGFVEECQGSSAVSYFWYRQTLNITADINDSGSIQWWLLICLAASWAVVYMCVIRGIETTGKVIYFTALFPYLVLTIFLIRGLTLPGATKGLIYLFTPNMHILQNPRVWLDAATQIFFSLSLAFGGHIAFASYNSPRNDCQKDAVVIALVNRMTSLYASIAVFSVLGFKATNDYEHCLDRNILSLINDFDFPEQSISRDDYPAVLMHLNATWPKRVAQLPLKACLLEDFLDKSASGPGLAFVVFTETDLHMPGAPVWAMLFFGMLFTLGLSTMFGTVEAVITPLLDVGVLPRWVPKEALTGLVCLVCFLSATCFTLQSGNYWLEIFDNFAASPNLLMLAFLEVVGVVYVYGMKRFCDDIAWMTGRRPSPYWRLTWRVVSPLLLTIFVAYIILLFWKPLRYKAWNPKYELFPSRQEKLYPGWARAACVLLSLLPVLWVPVAALAQLLTRRRRTWRDRDARPDTDMRPDTDTRPDTDMRPDTDMR.

The Cytoplasmic segment spans residues Met1–Gln26. A helical membrane pass occupies residues Tyr27–Leu47. Residues Cys48–Tyr51 lie on the Extracellular side of the membrane. A helical transmembrane segment spans residues Gly52 to Val74. The Cytoplasmic portion of the chain corresponds to Glu75–Gly88. The chain crosses the membrane as a helical span at residues Val89–Ile111. Over Ser112–Ser178 the chain is Extracellular. Asn144, Asn168, and Asn174 each carry an N-linked (GlcNAc...) asparagine glycan. A helical transmembrane segment spans residues Ile179 to Gly201. The Cytoplasmic portion of the chain corresponds to Ile202–Lys207. The chain crosses the membrane as a helical span at residues Val208–Leu230. The Extracellular portion of the chain corresponds to Pro231 to Val253. The helical transmembrane segment at Trp254–Ala276 threads the bilayer. Residues Ser277 to Asp288 lie on the Cytoplasmic side of the membrane. The helical transmembrane segment at Ala289 to Leu311 threads the bilayer. The Extracellular segment spans residues Gly312–Ala399. A glycan (N-linked (GlcNAc...) asparagine) is linked at Asn354. Residues Pro400–Val422 traverse the membrane as a helical segment. Residues Glu423–Glu442 lie on the Cytoplasmic side of the membrane. A helical membrane pass occupies residues Ala443–Asn465. The Extracellular portion of the chain corresponds to Tyr466 to Phe474. Residues Ala475–Met497 form a helical membrane-spanning segment. At Lys498–Arg517 the chain is on the cytoplasmic side. Residues Leu518 to Trp540 form a helical membrane-spanning segment. Topologically, residues Lys541 to Arg568 are extracellular. The chain crosses the membrane as a helical span at residues Ala569–Leu591. Topologically, residues Thr592 to Arg628 are cytoplasmic. Residues Asp602–Arg628 form a disordered region.

This sequence belongs to the sodium:neurotransmitter symporter (SNF) (TC 2.A.22) family. SLC6A18 subfamily. In terms of tissue distribution, abundantly expressed in kidney, but not in intestine.

Its subcellular location is the membrane. Does not show neutral amino acid transporter activity. This chain is Inactive sodium-dependent neutral amino acid transporter B(0)AT3, found in Homo sapiens (Human).